The chain runs to 442 residues: Hydroxycinnamoyltransferase 1 (442 aa).

Residues H159 and D389 each act as proton acceptor in the active site.

It belongs to the plant acyltransferase family. As to expression, expressed in roots, leaves, stems and seeds.

In terms of biological role, hydroxycinnamoyl transferase that catalyzes the transfer of an acyl from p-coumaryol-CoA to various acyl acceptors. Can use feruloyl-CoA and caffeoyl-CoA as acyl donors. In Oryza sativa subsp. japonica (Rice), this protein is Hydroxycinnamoyltransferase 1.